The chain runs to 312 residues: Olfactory receptor 6Z7 (312 aa).

Over Met1–Asp29 the chain is Extracellular. Asn9 is a glycosylation site (N-linked (GlcNAc...) asparagine). The helical transmembrane segment at Ala30–Ile50 threads the bilayer. Topologically, residues Tyr51–Asn69 are cytoplasmic. The chain crosses the membrane as a helical span at residues Leu70 to Trp90. Position 91 (Asn91) is a topological domain, extracellular. Residues Gly92–Val112 traverse the membrane as a helical segment. Cys101 and Cys193 form a disulfide bridge. The Cytoplasmic portion of the chain corresponds to Gly113 to Arg141. The chain crosses the membrane as a helical span at residues Pro142 to Ile162. At Lys163 to His195 the chain is on the extracellular side. The N-linked (GlcNAc...) asparagine glycan is linked to Asn190. Residues Val196–Leu216 form a helical membrane-spanning segment. The Cytoplasmic portion of the chain corresponds to Thr217–Ala241. The helical transmembrane segment at Phe242–Ile262 threads the bilayer. Topologically, residues Tyr263–Asn275 are extracellular. A helical transmembrane segment spans residues Lys276–Leu296. Topologically, residues Arg297–Ser312 are cytoplasmic.

It belongs to the G-protein coupled receptor 1 family.

The protein resides in the cell membrane. Functionally, odorant receptor. The sequence is that of Olfactory receptor 6Z7 from Mus musculus (Mouse).